A 508-amino-acid chain; its full sequence is Lysine--tRNA ligase (508 aa).

Mg(2+) is bound by residues E416 and E423.

This sequence belongs to the class-II aminoacyl-tRNA synthetase family. As to quaternary structure, homodimer. The cofactor is Mg(2+).

The protein resides in the cytoplasm. The enzyme catalyses tRNA(Lys) + L-lysine + ATP = L-lysyl-tRNA(Lys) + AMP + diphosphate. This Prochlorococcus marinus (strain MIT 9313) protein is Lysine--tRNA ligase.